The sequence spans 122 residues: MIQTETRLKVADNSGAREILTIKVLGGSGRKFANIGDIIVASVKQATPGGAVKKGDVVKAVIVRTKTGARRADGSYIKFDENAAVIIREDKNPRGTRIFGPVARELRDGGFMKIVSLAPEVL.

It belongs to the universal ribosomal protein uL14 family. As to quaternary structure, part of the 50S ribosomal subunit. Forms a cluster with proteins L3 and L19. In the 70S ribosome, L14 and L19 interact and together make contacts with the 16S rRNA in bridges B5 and B8.

Functionally, binds to 23S rRNA. Forms part of two intersubunit bridges in the 70S ribosome. This Streptococcus suis (strain 05ZYH33) protein is Large ribosomal subunit protein uL14.